The primary structure comprises 328 residues: Trans-O-hydroxybenzylidenepyruvate hydratase-aldolase (328 aa).

The protein belongs to the DapA family. As to quaternary structure, homotrimer.

The enzyme catalyses (3E)-4-(2-hydroxyphenyl)-2-oxobut-3-enoate + H2O = salicylaldehyde + pyruvate. It functions in the pathway aromatic compound metabolism; naphthalene degradation. With respect to regulation, inhibited bye p-chloromercuribenzoate and salicylaldehyde. Activated by salicylate. Involved in the naphthalene and naphthalenesulfonate catabolic pathway. Catalyzes the transformation of trans-O-hydroxybenzylidenepyruvate (THBPA) to salicylaldehyde and pyruvate. The reaction is reversible. Can also use 2,4-dihydroxybenzalpyruvate (2,4-DHBP) and 2,6-dihydroxybenzalpyruvate (2,6-DHBP). This is Trans-O-hydroxybenzylidenepyruvate hydratase-aldolase (nsaE) from Sphingobium xenophagum.